Here is a 52-residue protein sequence, read N- to C-terminus: Troponin C, skeletal muscle (52 aa).

2 consecutive EF-hand domains span residues lysine 2–histidine 37 and valine 38–lysine 52. Ca(2+) contacts are provided by aspartate 15, asparagine 17, aspartate 19, tyrosine 21, and glutamate 26.

It belongs to the troponin C family.

Its function is as follows. Troponin is the central regulatory protein of striated muscle contraction. Tn consists of three components: Tn-I which is the inhibitor of actomyosin ATPase, Tn-T which contains the binding site for tropomyosin and Tn-C. The binding of calcium to Tn-C abolishes the inhibitory action of Tn on actin filaments. The chain is Troponin C, skeletal muscle from Protopterus dolloi (Slender lungfish).